The chain runs to 261 residues: Cytochrome c oxidase subunit 3 (261 aa).

Residues 1-15 lie on the Mitochondrial matrix side of the membrane; the sequence is MTHQTHAYHMVDPSP. Residues 16–34 form a helical membrane-spanning segment; the sequence is WPLTGALSALLMTSGLTMW. Topologically, residues 35-40 are mitochondrial intermembrane; that stretch reads FHYHSV. Residues 41–66 form a helical membrane-spanning segment; sequence VLLFLGLMTNTLTMFQWWRDVVREGT. Topologically, residues 67-72 are mitochondrial matrix; it reads FQGHHT. The helical transmembrane segment at 73 to 105 threads the bilayer; it reads PVVQEGLRYGMILFITSEVLFFTGFFWAFYHSS. Over 106–128 the chain is Mitochondrial intermembrane; that stretch reads LAPTPELGSYWPPVGVYPLNPLE. A helical membrane pass occupies residues 129–152; sequence VPLLNTSVLLASGVTITWAHHSLM. At 153 to 155 the chain is on the mitochondrial matrix side; that stretch reads EGN. The chain crosses the membrane as a helical span at residues 156 to 183; it reads RKNMLQALLITILLGVYFTLLQMFEYYE. The Mitochondrial intermembrane segment spans residues 184–190; sequence ASFTISD. A helical transmembrane segment spans residues 191–223; that stretch reads GIYGSTFFVTTGFHGLHVIIGSTFLLTCFIRQL. Over 224–232 the chain is Mitochondrial matrix; the sequence is KFHFTSNHH. A helical transmembrane segment spans residues 233–256; sequence FGFEAAAWYWHFVDVVWLFLYLSI. Over 257–261 the chain is Mitochondrial intermembrane; that stretch reads YWWGS.

This sequence belongs to the cytochrome c oxidase subunit 3 family. In terms of assembly, component of the cytochrome c oxidase (complex IV, CIV), a multisubunit enzyme composed of 14 subunits. The complex is composed of a catalytic core of 3 subunits MT-CO1, MT-CO2 and MT-CO3, encoded in the mitochondrial DNA, and 11 supernumerary subunits COX4I, COX5A, COX5B, COX6A, COX6B, COX6C, COX7A, COX7B, COX7C, COX8 and NDUFA4, which are encoded in the nuclear genome. The complex exists as a monomer or a dimer and forms supercomplexes (SCs) in the inner mitochondrial membrane with NADH-ubiquinone oxidoreductase (complex I, CI) and ubiquinol-cytochrome c oxidoreductase (cytochrome b-c1 complex, complex III, CIII), resulting in different assemblies (supercomplex SCI(1)III(2)IV(1) and megacomplex MCI(2)III(2)IV(2)).

It localises to the mitochondrion inner membrane. The catalysed reaction is 4 Fe(II)-[cytochrome c] + O2 + 8 H(+)(in) = 4 Fe(III)-[cytochrome c] + 2 H2O + 4 H(+)(out). Component of the cytochrome c oxidase, the last enzyme in the mitochondrial electron transport chain which drives oxidative phosphorylation. The respiratory chain contains 3 multisubunit complexes succinate dehydrogenase (complex II, CII), ubiquinol-cytochrome c oxidoreductase (cytochrome b-c1 complex, complex III, CIII) and cytochrome c oxidase (complex IV, CIV), that cooperate to transfer electrons derived from NADH and succinate to molecular oxygen, creating an electrochemical gradient over the inner membrane that drives transmembrane transport and the ATP synthase. Cytochrome c oxidase is the component of the respiratory chain that catalyzes the reduction of oxygen to water. Electrons originating from reduced cytochrome c in the intermembrane space (IMS) are transferred via the dinuclear copper A center (CU(A)) of subunit 2 and heme A of subunit 1 to the active site in subunit 1, a binuclear center (BNC) formed by heme A3 and copper B (CU(B)). The BNC reduces molecular oxygen to 2 water molecules using 4 electrons from cytochrome c in the IMS and 4 protons from the mitochondrial matrix. This Mammuthus primigenius (Siberian woolly mammoth) protein is Cytochrome c oxidase subunit 3 (MT-CO3).